A 941-amino-acid chain; its full sequence is Coiled-coil domain-containing protein 39 (941 aa).

Coiled coils occupy residues 16–122, 164–273, 306–605, and 665–825; these read AIPV…ENGI, AQQD…ESEI, QLKG…EIKV, and IKAA…EEQD. The interval 868-941 is disordered; it reads PTASTKGSRQ…SNVKSKKSSK (74 aa). Composition is skewed to low complexity over residues 871 to 903 and 914 to 934; these read STKG…SQSS and SSSL…SSNV. Phosphoserine occurs at positions 892 and 900.

It belongs to the CCDC39 family. In terms of tissue distribution, mainly expressed in nasal brushings and, to a lesser extent, in lungs and testis.

It is found in the cytoplasm. The protein localises to the cytoskeleton. The protein resides in the cilium axoneme. Required for assembly of dynein regulatory complex (DRC) and inner dynein arm (IDA) complexes, which are responsible for ciliary beat regulation, thereby playing a central role in motility in cilia and flagella. Probably acts together with CCDC40 to form a molecular ruler that determines the 96 nanometer (nm) repeat length and arrangements of components in cilia and flagella. Not required for outer dynein arm complexes assembly. This is Coiled-coil domain-containing protein 39 from Homo sapiens (Human).